Reading from the N-terminus, the 398-residue chain is Aldo-keto reductase ausK (398 aa).

Asp-76 is a binding site for NADP(+). The active-site Proton donor is the Tyr-81. Residue His-156 participates in substrate binding. NADP(+) is bound by residues Cys-186–Asn-187, Gln-212, Asp-241–Arg-251, and Arg-317–Asn-325.

This sequence belongs to the aldo/keto reductase family. Aldo/keto reductase 2 subfamily. In terms of assembly, homodimer.

It participates in secondary metabolite biosynthesis; terpenoid biosynthesis. In terms of biological role, aldo-keto reductase; part of the gene cluster B that mediates the biosynthesis of austinol and dehydroaustinol, two fungal meroterpenoids. The first step of the pathway is the synthesis of 3,5-dimethylorsellinic acid by the polyketide synthase ausA. 3,5-dimethylorsellinic acid is then prenylated by the polyprenyl transferase ausN. Further epoxidation by the FAD-dependent monooxygenase ausM and cyclization by the probable terpene cyclase ausL lead to the formation of protoaustinoid A. Protoaustinoid A is then oxidized to spiro-lactone preaustinoid A3 by the combined action of the FAD-binding monooxygenases ausB and ausC, and the dioxygenase ausE. Acid-catalyzed keto-rearrangement and ring contraction of the tetraketide portion of preaustinoid A3 by ausJ lead to the formation of preaustinoid A4. The aldo-keto reductase ausK, with the help of ausH, is involved in the next step by transforming preaustinoid A4 into isoaustinone which is in turn hydroxylated by the P450 monooxygenase ausI to form austinolide. Finally, the cytochrome P450 monooxygenase ausG modifies austinolide to austinol. Austinol can be further modified to dehydroaustinol which forms a diffusible complex with diorcinol that initiates conidiation. Due to genetic rearrangements of the clusters and the subsequent loss of some enzymes, the end products of the Emericella nidulans austinoid biosynthesis clusters are austinol and dehydroaustinol, even if additional enzymes, such as the O-acetyltransferase ausQ and the cytochrome P450 monooxygenase ausR are still functional. The sequence is that of Aldo-keto reductase ausK from Emericella nidulans (strain FGSC A4 / ATCC 38163 / CBS 112.46 / NRRL 194 / M139) (Aspergillus nidulans).